Consider the following 293-residue polypeptide: Serine/threonine-protein phosphatase 2A catalytic subunit beta isoform (293 aa).

4 residues coordinate Mn(2+): D41, H43, D69, and N101. H102 (proton donor) is an active-site residue. H151 and H225 together coordinate Mn(2+). Y291 carries the post-translational modification Phosphotyrosine. L293 carries the post-translational modification Leucine methyl ester.

This sequence belongs to the PPP phosphatase family. PP-1 subfamily. Found in a complex with at least ARL2, PPP2CB, PPP2R1A, PPP2R2A, PPP2R5E and TBCD. Interacts with TBCD. PP2A consists of a common heterodimeric core enzyme (composed of a 36 kDa catalytic subunit (subunit C) and a 65 kDa constant regulatory subunit (PR65) (subunit A)) that associates with a variety of regulatory subunits. Proteins that associate with the core dimer include three families of regulatory subunits B (the R2/B/PR55/B55, R3/B''/PR72/PR130/PR59 and R5/B'/B56 families), the 48 kDa variable regulatory subunit, viral proteins, and cell signaling molecules. Binds PPME1. May indirectly interact with SGO1, most probably through regulatory B56 subunits. Interacts with CTTNBP2NL. Interacts with PTPA. Part of the core of STRIPAK complexes composed of PP2A catalytic and scaffolding subunits, the striatins (PP2A regulatory subunits), the striatin-associated proteins MOB4, STRIP1 and STRIP2, PDCD10 and members of the STE20 kinases, such as STK24 and STK26. Mn(2+) serves as cofactor. In terms of processing, reversibly methyl esterified on Leu-293 by leucine carboxyl methyltransferase 1 (Lcmt1) and protein phosphatase methylesterase 1 (PPME1). Carboxyl methylation influences the affinity of the catalytic subunit for the different regulatory subunits, thereby modulating the PP2A holoenzyme's substrate specificity, enzyme activity and cellular localization. Phosphorylation of either threonine (by autophosphorylation-activated protein kinase) or tyrosine results in inactivation of the phosphatase. Auto-dephosphorylation has been suggested as a mechanism for reactivation. Post-translationally, may be monoubiquitinated by NOSIP.

It is found in the cytoplasm. The protein localises to the nucleus. Its subcellular location is the chromosome. It localises to the centromere. The protein resides in the cytoskeleton. It is found in the spindle pole. It carries out the reaction O-phospho-L-seryl-[protein] + H2O = L-seryl-[protein] + phosphate. The enzyme catalyses O-phospho-L-threonyl-[protein] + H2O = L-threonyl-[protein] + phosphate. Its function is as follows. Catalytic subunit of protein phosphatase 2A (PP2A), a serine/threonine phosphatase involved in the regulation of a wide variety of enzymes, signal transduction pathways, and cellular events. PP2A can modulate the activity of phosphorylase B kinase, casein kinase 2, mitogen-stimulated S6 kinase, and MAP-2 kinase. Part of the striatin-interacting phosphatase and kinase (STRIPAK) complexes. STRIPAK complexes have critical roles in protein (de)phosphorylation and are regulators of multiple signaling pathways including Hippo, MAPK, nuclear receptor and cytoskeleton remodeling. Different types of STRIPAK complexes are involved in a variety of biological processes such as cell growth, differentiation, apoptosis, metabolism and immune regulation. The sequence is that of Serine/threonine-protein phosphatase 2A catalytic subunit beta isoform (PPP2CB) from Sus scrofa (Pig).